Here is a 400-residue protein sequence, read N- to C-terminus: Nicotinate phosphoribosyltransferase (400 aa).

Histidine 220 carries the post-translational modification Phosphohistidine; by autocatalysis.

It belongs to the NAPRTase family. In terms of processing, transiently phosphorylated on a His residue during the reaction cycle. Phosphorylation strongly increases the affinity for substrates and increases the rate of nicotinate D-ribonucleotide production. Dephosphorylation regenerates the low-affinity form of the enzyme, leading to product release.

It carries out the reaction nicotinate + 5-phospho-alpha-D-ribose 1-diphosphate + ATP + H2O = nicotinate beta-D-ribonucleotide + ADP + phosphate + diphosphate. The protein operates within cofactor biosynthesis; NAD(+) biosynthesis; nicotinate D-ribonucleotide from nicotinate: step 1/1. Its function is as follows. Catalyzes the synthesis of beta-nicotinate D-ribonucleotide from nicotinate and 5-phospho-D-ribose 1-phosphate at the expense of ATP. This chain is Nicotinate phosphoribosyltransferase, found in Shigella dysenteriae serotype 1 (strain Sd197).